A 2258-amino-acid chain; its full sequence is Genome polyprotein 1 (2258 aa).

The region spanning S439–V597 is the Helicase ATP-binding domain. ATP is bound at residue R487–T494. Residues D612–F778 enclose the Helicase C-terminal domain. An O-(5'-phospho-RNA)-tyrosine modification is found at Y1141. The region spanning A1257–P1476 is the Peptidase C4 domain. Residues H1302, D1338, and C1405 each act as for nuclear inclusion protein A activity in the active site. One can recognise a RdRp catalytic domain in the interval W1745 to F1869. Disordered stretches follow at residues N2027–S2047 and T2233–R2258. Over residues T2242–R2258 the composition is skewed to basic and acidic residues.

The protein belongs to the bymoviruses polyprotein 1 family. VPg is uridylylated by the polymerase and is covalently attached to the 5'-end of the genomic RNA. This uridylylated form acts as a nucleotide-peptide primer for the polymerase. Post-translationally, the viral RNA1 of bymoviruses is expressed as a single polyprotein which undergoes post-translational proteolytic processing by the main proteinase NIa-pro resulting in the production of at least eight individual proteins.

The protein localises to the host cytoplasmic vesicle. The protein resides in the virion. It carries out the reaction RNA(n) + a ribonucleoside 5'-triphosphate = RNA(n+1) + diphosphate. The catalysed reaction is Hydrolyzes glutaminyl bonds, and activity is further restricted by preferences for the amino acids in P6 - P1' that vary with the species of potyvirus, e.g. Glu-Xaa-Xaa-Tyr-Xaa-Gln-|-(Ser or Gly) for the enzyme from tobacco etch virus. The natural substrate is the viral polyprotein, but other proteins and oligopeptides containing the appropriate consensus sequence are also cleaved.. Indispensable for virus replication. Functionally, mediates the cap-independent, EIF4E-dependent translation of viral genomic RNAs. Binds to the cap-binding site of host EIF4E and thus interferes with the host EIF4E-dependent mRNA export and translation. VPg-RNA directly binds EIF4E and is a template for transcription. Also forms trimeric complexes with EIF4E-EIF4G, which are templates for translation. Its function is as follows. Has RNA-binding and proteolytic activities. In terms of biological role, an RNA-dependent RNA polymerase that plays an essential role in the virus replication. This is Genome polyprotein 1 from Barley mild mosaic virus (strain Na1) (BaMMV).